The following is a 192-amino-acid chain: Crossover junction endodeoxyribonuclease RuvC (192 aa).

Residues Asp7, Glu67, and Asp140 contribute to the active site. Positions 7, 67, and 140 each coordinate Mg(2+). A disordered region spans residues 158-192 (RQSGVPPRTNSRRKSGTGGSWEQFVRQSPNVVVRS). Over residues 182–192 (VRQSPNVVVRS) the composition is skewed to polar residues.

This sequence belongs to the RuvC family. As to quaternary structure, homodimer which binds Holliday junction (HJ) DNA. The HJ becomes 2-fold symmetrical on binding to RuvC with unstacked arms; it has a different conformation from HJ DNA in complex with RuvA. In the full resolvosome a probable DNA-RuvA(4)-RuvB(12)-RuvC(2) complex forms which resolves the HJ. Mg(2+) serves as cofactor.

The protein localises to the cytoplasm. The catalysed reaction is Endonucleolytic cleavage at a junction such as a reciprocal single-stranded crossover between two homologous DNA duplexes (Holliday junction).. Functionally, the RuvA-RuvB-RuvC complex processes Holliday junction (HJ) DNA during genetic recombination and DNA repair. Endonuclease that resolves HJ intermediates. Cleaves cruciform DNA by making single-stranded nicks across the HJ at symmetrical positions within the homologous arms, yielding a 5'-phosphate and a 3'-hydroxyl group; requires a central core of homology in the junction. The consensus cleavage sequence is 5'-(A/T)TT(C/G)-3'. Cleavage occurs on the 3'-side of the TT dinucleotide at the point of strand exchange. HJ branch migration catalyzed by RuvA-RuvB allows RuvC to scan DNA until it finds its consensus sequence, where it cleaves and resolves the cruciform DNA. The sequence is that of Crossover junction endodeoxyribonuclease RuvC from Chlorobium chlorochromatii (strain CaD3).